A 147-amino-acid chain; its full sequence is uncharacterized protein (147 aa).

A signal peptide spans 1–21 (MRTIFVGVLLLAIMGEGRLCA).

This is an uncharacterized protein from Treponema pallidum (strain Nichols).